We begin with the raw amino-acid sequence, 257 residues long: Acetylglutamate kinase (257 aa).

Substrate is bound by residues 43 to 44 (GG), Arg65, and Asn157.

It belongs to the acetylglutamate kinase family. ArgB subfamily.

Its subcellular location is the cytoplasm. The enzyme catalyses N-acetyl-L-glutamate + ATP = N-acetyl-L-glutamyl 5-phosphate + ADP. The protein operates within amino-acid biosynthesis; L-arginine biosynthesis; N(2)-acetyl-L-ornithine from L-glutamate: step 2/4. Functionally, catalyzes the ATP-dependent phosphorylation of N-acetyl-L-glutamate. The polypeptide is Acetylglutamate kinase (Actinobacillus succinogenes (strain ATCC 55618 / DSM 22257 / CCUG 43843 / 130Z)).